Here is a 224-residue protein sequence, read N- to C-terminus: ATP-dependent dethiobiotin synthetase BioD (224 aa).

14 to 19 (GIGKTV) provides a ligand contact to ATP. T18 serves as a coordination point for Mg(2+). K39 is an active-site residue. A substrate-binding site is contributed by S43. ATP-binding positions include D56, 117-120 (EGVG), and 177-178 (NE). D56 and E117 together coordinate Mg(2+).

Belongs to the dethiobiotin synthetase family. Homodimer. The cofactor is Mg(2+).

The protein resides in the cytoplasm. The enzyme catalyses (7R,8S)-7,8-diammoniononanoate + CO2 + ATP = (4R,5S)-dethiobiotin + ADP + phosphate + 3 H(+). Its pathway is cofactor biosynthesis; biotin biosynthesis; biotin from 7,8-diaminononanoate: step 1/2. Its function is as follows. Catalyzes a mechanistically unusual reaction, the ATP-dependent insertion of CO2 between the N7 and N8 nitrogen atoms of 7,8-diaminopelargonic acid (DAPA, also called 7,8-diammoniononanoate) to form a ureido ring. This Xanthomonas campestris pv. campestris (strain 8004) protein is ATP-dependent dethiobiotin synthetase BioD.